The primary structure comprises 444 residues: Phosphoribosylamine--glycine ligase (444 aa).

Positions Arg-109–Asn-324 constitute an ATP-grasp domain. Leu-140 to Thr-202 is an ATP binding site. 3 residues coordinate Mg(2+): Gln-282, Glu-294, and Asn-296. Mn(2+)-binding residues include Gln-282, Glu-294, and Asn-296.

It belongs to the GARS family. Mg(2+) serves as cofactor. Mn(2+) is required as a cofactor.

It catalyses the reaction 5-phospho-beta-D-ribosylamine + glycine + ATP = N(1)-(5-phospho-beta-D-ribosyl)glycinamide + ADP + phosphate + H(+). It participates in purine metabolism; IMP biosynthesis via de novo pathway; N(1)-(5-phospho-D-ribosyl)glycinamide from 5-phospho-alpha-D-ribose 1-diphosphate: step 2/2. The chain is Phosphoribosylamine--glycine ligase from Methanocaldococcus jannaschii (strain ATCC 43067 / DSM 2661 / JAL-1 / JCM 10045 / NBRC 100440) (Methanococcus jannaschii).